The chain runs to 206 residues: N-(5'-phosphoribosyl)anthranilate isomerase (206 aa).

The protein belongs to the TrpF family.

The enzyme catalyses N-(5-phospho-beta-D-ribosyl)anthranilate = 1-(2-carboxyphenylamino)-1-deoxy-D-ribulose 5-phosphate. It functions in the pathway amino-acid biosynthesis; L-tryptophan biosynthesis; L-tryptophan from chorismate: step 3/5. The sequence is that of N-(5'-phosphoribosyl)anthranilate isomerase from Pseudomonas putida (strain W619).